The primary structure comprises 450 residues: Divalent metal cation transporter MntH (450 aa).

11 helical membrane passes run 34–54, 61–81, 108–128, 141–161, 170–190, 212–232, 263–283, 305–325, 361–381, 383–403, and 422–442; these read LSFLGPGLLVAVGYMDPGNWI, AQYGYTLLFVILISSLSAMLL, IAIIFWIIAELAIIATDIAEV, IPLIVGALITVLDVFLLLFIM, AIVGTLIFTVLFIFIFEVYIS, GILYIALGIIGATIMPHNLYL, IQLSIAFVVNCLLLVLGASLF, PVLGATMGAIMSTLFAVALLA, SLAVIPVIVCLSIFKGNAAKI, QLLVFSQVFLSIALPFCLIPL, and VNIISWTLIIILSILNVYLIV.

It belongs to the NRAMP family.

It is found in the cell membrane. Functionally, h(+)-stimulated, divalent metal cation uptake system. The polypeptide is Divalent metal cation transporter MntH (Staphylococcus aureus (strain bovine RF122 / ET3-1)).